The following is a 572-amino-acid chain: Proline--tRNA ligase (572 aa).

Belongs to the class-II aminoacyl-tRNA synthetase family. ProS type 1 subfamily. Homodimer.

Its subcellular location is the cytoplasm. The catalysed reaction is tRNA(Pro) + L-proline + ATP = L-prolyl-tRNA(Pro) + AMP + diphosphate. In terms of biological role, catalyzes the attachment of proline to tRNA(Pro) in a two-step reaction: proline is first activated by ATP to form Pro-AMP and then transferred to the acceptor end of tRNA(Pro). As ProRS can inadvertently accommodate and process non-cognate amino acids such as alanine and cysteine, to avoid such errors it has two additional distinct editing activities against alanine. One activity is designated as 'pretransfer' editing and involves the tRNA(Pro)-independent hydrolysis of activated Ala-AMP. The other activity is designated 'posttransfer' editing and involves deacylation of mischarged Ala-tRNA(Pro). The misacylated Cys-tRNA(Pro) is not edited by ProRS. The protein is Proline--tRNA ligase of Yersinia pseudotuberculosis serotype O:1b (strain IP 31758).